Reading from the N-terminus, the 484-residue chain is Regulator of G-protein signaling 9 (484 aa).

One can recognise a DEP domain in the interval 30 to 105 (PDTGVKTQSQ…PDSSLYRFQT (76 aa)). The G protein gamma domain maps to 219–280 (ITAVKKEIMY…ITDDTQFWDL (62 aa)). One can recognise an RGS domain in the interval 299–414 (NFSELIRDPK…LKSPIYKEML (116 aa)).

Heterodimer with Gbeta5. Interacts with RGS7BP, leading to regulate the subcellular location of the heterodimer formed with Gbeta5. Component of the RGS9-1-Gbeta5 complex composed of RGS9 (RGS9-1), Gbeta5 (GNB5) and RGS9BP. Post-translationally, phosphorylation is decreased by light exposition.

Its subcellular location is the membrane. Inhibits signal transduction by increasing the GTPase activity of G protein alpha subunits thereby driving them into their inactive GDP-bound form. Binds to G(t)-alpha. Involved in phototransduction; key element in the recovery phase of visual transduction. This is Regulator of G-protein signaling 9 from Tamias striatus (Eastern chipmunk).